Consider the following 62-residue polypeptide: Small ribosomal subunit protein eS27 (62 aa).

4 residues coordinate Zn(2+): Cys17, Cys20, Cys36, and Cys39. The segment at 17–39 (CPDCENEQLVFEKATSVVECTVC) adopts a C4-type zinc-finger fold.

It belongs to the eukaryotic ribosomal protein eS27 family. As to quaternary structure, part of the 30S ribosomal subunit. The cofactor is Zn(2+).

In Methanocorpusculum labreanum (strain ATCC 43576 / DSM 4855 / Z), this protein is Small ribosomal subunit protein eS27.